The chain runs to 407 residues: Amylovoran biosynthesis glycosyltransferase AmsK (407 aa).

This sequence belongs to the glycosyltransferase group 1 family. Glycosyltransferase 4 subfamily.

It functions in the pathway glycan metabolism; exopolysaccharide biosynthesis. Functionally, involved in the biosynthesis of amylovoran which functions as a virulence factor. The sequence is that of Amylovoran biosynthesis glycosyltransferase AmsK (amsK) from Erwinia amylovora (Fire blight bacteria).